Here is a 576-residue protein sequence, read N- to C-terminus: Sulfite reductase [NADPH] hemoprotein beta-component (576 aa).

Positions 435, 441, 480, and 484 each coordinate [4Fe-4S] cluster. Siroheme is bound at residue C484.

Belongs to the nitrite and sulfite reductase 4Fe-4S domain family. As to quaternary structure, alpha(8)-beta(8). The alpha component is a flavoprotein, the beta component is a hemoprotein. Siroheme serves as cofactor. Requires [4Fe-4S] cluster as cofactor.

It carries out the reaction hydrogen sulfide + 3 NADP(+) + 3 H2O = sulfite + 3 NADPH + 4 H(+). The protein operates within sulfur metabolism; hydrogen sulfide biosynthesis; hydrogen sulfide from sulfite (NADPH route): step 1/1. Component of the sulfite reductase complex that catalyzes the 6-electron reduction of sulfite to sulfide. This is one of several activities required for the biosynthesis of L-cysteine from sulfate. The polypeptide is Sulfite reductase [NADPH] hemoprotein beta-component (Proteus mirabilis (strain HI4320)).